Here is a 40-residue protein sequence, read N- to C-terminus: Photosystem II reaction center protein J (40 aa).

A helical membrane pass occupies residues 8–28 (IPLWIIGTVAGIVVIGLIGLF).

Belongs to the PsbJ family. PSII is composed of 1 copy each of membrane proteins PsbA, PsbB, PsbC, PsbD, PsbE, PsbF, PsbH, PsbI, PsbJ, PsbK, PsbL, PsbM, PsbT, PsbX, PsbY, PsbZ, Psb30/Ycf12, at least 3 peripheral proteins of the oxygen-evolving complex and a large number of cofactors. It forms dimeric complexes.

It localises to the plastid. Its subcellular location is the chloroplast thylakoid membrane. One of the components of the core complex of photosystem II (PSII). PSII is a light-driven water:plastoquinone oxidoreductase that uses light energy to abstract electrons from H(2)O, generating O(2) and a proton gradient subsequently used for ATP formation. It consists of a core antenna complex that captures photons, and an electron transfer chain that converts photonic excitation into a charge separation. In Pisum sativum (Garden pea), this protein is Photosystem II reaction center protein J.